The primary structure comprises 769 residues: DNA helicase/primase complex-associated protein (769 aa).

The protein belongs to the herpesviridae HEPA family. In terms of assembly, associates with the primase and the helicase to form the helicase-primase complex. Interacts with the origin-binding protein. Interacts with the polymerase catalytic subunit.

The protein resides in the host nucleus. Component of the helicase/primase complex. Unwinds the DNA at the replication forks and generates single-stranded DNA for both leading and lagging strand synthesis. The primase synthesizes short RNA primers on the lagging strand that the polymerase presumably elongates using dNTPs. The primase-associated factor has no known catalytic activity in the complex and may serve to facilitate the formation of the replisome by directly interacting with the origin-binding protein and the polymerase. The polypeptide is DNA helicase/primase complex-associated protein (MDV020) (Gallus gallus (Chicken)).